Consider the following 67-residue polypeptide: MAVPKRKQSRANTHARRSQWKAEVPTLVKTVENGKVTYSLPHRAKVVEDSAGTALFLEYKGRKVADV.

A compositionally biased stretch (basic residues) spans methionine 1 to glutamine 19. Positions methionine 1–tryptophan 20 are disordered.

Belongs to the bacterial ribosomal protein bL32 family.

This is Large ribosomal subunit protein bL32 from Leifsonia xyli subsp. xyli (strain CTCB07).